The primary structure comprises 194 residues: Calcium channel flower (194 aa).

Transmembrane regions (helical) follow at residues 35–55, 66–88, and 113–133; these read LGIV…FSII, IIQM…VCFE, and AIPP…GLIF.

Belongs to the calcium channel flower family. Homomultimer. Associates with the dally/ magu complex.

It is found in the cytoplasmic vesicle. The protein localises to the secretory vesicle. Its subcellular location is the synaptic vesicle membrane. It localises to the presynaptic cell membrane. The protein resides in the endosome. Channel activity is inhibited by La(3+), which reduces Ca(2+) influx and thus inhibits it's function in promoting activity-dependent bulk endocytosis (ADBE) in response to high stimuli. Transmembrane protein which mediates synaptic endocytosis, fitness-based cell culling, neuronal culling, morphogen gradient scaling, and calcium transport. Regulates synaptic endocytosis and hence couples exo- with endocytosis. Controls two major modes of synaptic vesicle (SV) endocytosis in the synaptic boutons of neuromuscular junctions (NMJs); Ca(2+) channel-independent Clathrin-mediated endocytosis (CME) in response to mild stimulation, and Ca(2+) channel-dependent activity-dependent bulk endocytosis (ADBE) in response to strong stimulation. Functions in ADBE and subsequent SV reformation from bulk endosomes by initiating Ca(2+) channel-dependent phosphatidylinositol 4,5-bisphosphate (PtdIns(4,5)P2) compartmentalization in synaptic boutons. There it acts at the periactive zone to provide the low Ca(2+) levels required to initiate Calcineurin activation and upregulate PtdIns(4,5)P2. Conversely PtdIns(4,5)P2 enhances fwe Ca(2+) channel-activity, establishing a positive feedback loop that induces PtdIns(4,5)P2 microdomain at the periactive zone. These microdomains trigger bulk membrane invagination (i.e. ADBE) by triggering actin polymerization while also promoting localization of fwe to bulk endosomes, thereby removing the ADBE trigger to reduce endocytosis and prevent excess membrane uptake. PtdIns(4,5)P2 then promotes SV reformation from the bulk endosomes, to coordinate ADBE and subsequent SV reformation. Different combinations of the flower isoforms at the cell membrane are also required for the identification and elimination of suboptimal or supernumerary cells during development, regeneration, and adulthood. Required for the recognition and elimination of unfit cells in the developing wing during cell competition. In the developing pupal retina, mediates the elimination of unwanted postmitotic neurons, including supernumerary photoreceptor neurons that form at the periphery of the retina and are contained within incomplete ommatidia units. Also required for efficient elimination and replacement of old neurons by newly generated neurons during regeneration in the adult brain following mechanical injury. Downstream of the flower fitness fingerprints, cells identified as unwanted or unfit are eliminated via apoptosis through the expression of ahuizotl (azot). However, the cells marked for elimination by the flower isoforms only undergo apoptosis if additional thresholds are met; (1) their neighboring fit/healthy cells express different levels of the fwe isoforms, and (2) the levels of the protective signal SPARC expressed by the loser or unwanted cells are unable to inhibit caspase activation. These additional thresholds for flower-mediated apoptosis, allows useful cells to recover from transient and limited stress before they are unnecessarily eliminated. Functions with dally and magu in a mechanism of scaling, which utilises apoptosis to ensure that the dpp morphogen gradient, which mediates organ growth, remains proportional to the size of the growing wing. In this mechanism, fwe represses dally- and Magu-dependent activity in expanding the gradient, and dally/Magu inhibits fwe-dependent apoptosis to keep cell death rate low. When the levels of these different proteins are optimally regulated the gradient correctly scales with organ growth but when this fails, fwe-mediated apoptosis is activated to trim the developing tissue to match the correct size of the gradient. This is Calcium channel flower from Drosophila yakuba (Fruit fly).